The chain runs to 416 residues: Gamma-glutamyl phosphate reductase (416 aa).

This sequence belongs to the gamma-glutamyl phosphate reductase family.

The protein localises to the cytoplasm. It carries out the reaction L-glutamate 5-semialdehyde + phosphate + NADP(+) = L-glutamyl 5-phosphate + NADPH + H(+). The protein operates within amino-acid biosynthesis; L-proline biosynthesis; L-glutamate 5-semialdehyde from L-glutamate: step 2/2. Functionally, catalyzes the NADPH-dependent reduction of L-glutamate 5-phosphate into L-glutamate 5-semialdehyde and phosphate. The product spontaneously undergoes cyclization to form 1-pyrroline-5-carboxylate. The sequence is that of Gamma-glutamyl phosphate reductase from Streptococcus equi subsp. zooepidemicus (strain MGCS10565).